Reading from the N-terminus, the 333-residue chain is Fructose-1,6-bisphosphatase class 1 (333 aa).

Residues E90, D112, L114, and D115 each coordinate Mg(2+). Residues 115–118 (DGSS), N207, and K273 contribute to the substrate site. E279 lines the Mg(2+) pocket.

It belongs to the FBPase class 1 family. In terms of assembly, homotetramer. Mg(2+) serves as cofactor.

Its subcellular location is the cytoplasm. It carries out the reaction beta-D-fructose 1,6-bisphosphate + H2O = beta-D-fructose 6-phosphate + phosphate. It functions in the pathway carbohydrate biosynthesis; gluconeogenesis. The chain is Fructose-1,6-bisphosphatase class 1 from Aromatoleum aromaticum (strain DSM 19018 / LMG 30748 / EbN1) (Azoarcus sp. (strain EbN1)).